Here is a 911-residue protein sequence, read N- to C-terminus: Protein argonaute 4B (911 aa).

Disordered stretches follow at residues 1–51 and 149–171; these read MDAH…RPGL and KTAA…KRVR. The PAZ domain maps to 281-396; sequence PVIDFLLANQ…FPIELCSLIP (116 aa). The region spanning 565–872 is the Piwi domain; that stretch reads FLLCLLPERK…AAAQVGTFLK (308 aa).

It belongs to the argonaute family. Ago subfamily.

Probably involved in the RNA silencing pathway. May bind to short RNAs such as microRNAs (miRNAs) or short interfering RNAs (siRNAs), and represses the translation of mRNAs which are complementary to them. This Oryza sativa subsp. japonica (Rice) protein is Protein argonaute 4B (AGO4B).